Reading from the N-terminus, the 205-residue chain is Large ribosomal subunit protein uL4 (205 aa).

A disordered region spans residues 53–77; sequence RAAVRGGGRKPWKQKGTGRARAGSI. Positions 59 to 70 are enriched in basic residues; sequence GGRKPWKQKGTG.

This sequence belongs to the universal ribosomal protein uL4 family. As to quaternary structure, part of the 50S ribosomal subunit.

Functionally, one of the primary rRNA binding proteins, this protein initially binds near the 5'-end of the 23S rRNA. It is important during the early stages of 50S assembly. It makes multiple contacts with different domains of the 23S rRNA in the assembled 50S subunit and ribosome. In terms of biological role, forms part of the polypeptide exit tunnel. This chain is Large ribosomal subunit protein uL4, found in Acidithiobacillus ferrooxidans (strain ATCC 23270 / DSM 14882 / CIP 104768 / NCIMB 8455) (Ferrobacillus ferrooxidans (strain ATCC 23270)).